We begin with the raw amino-acid sequence, 532 residues long: Pre-piRNA 3'-exonuclease trimmer (532 aa).

D28, E30, D270, and D365 together coordinate Mg(2+). The chain crosses the membrane as a helical span at residues 503-523; it reads AGRFAIWSGSIVTGGLALYLI.

It belongs to the CAF1 family. Interacts with Papi/Tdrkh; interaction takes place on the mitochondrial surface and recruits PNLDC1/trimmer to PIWI-bound pre-piRNAs. It depends on Mg(2+) as a cofactor.

It is found in the mitochondrion outer membrane. Functionally, 3'-5' exonuclease that specifically cleaves precursor piRNAs (pre-piRNAs) at their 3' ends. Trims pre-piRNAs to their mature size, a process required for piRNAs maturation and stabilization, and subsequent pre-piRNAs 2'-O-methylation. The piRNA metabolic process mediates the repression of transposable elements during meiosis by forming complexes composed of piRNAs and Piwi proteins and govern the methylation and subsequent repression of transposons. The polypeptide is Pre-piRNA 3'-exonuclease trimmer (Bombyx mori (Silk moth)).